Here is a 127-residue protein sequence, read N- to C-terminus: Aspartate 1-decarboxylase (127 aa).

The Schiff-base intermediate with substrate; via pyruvic acid role is filled by serine 25. At serine 25 the chain carries Pyruvic acid (Ser). Threonine 57 is a substrate binding site. Tyrosine 58 serves as the catalytic Proton donor. Substrate is bound at residue 73–75; it reads GAA.

Belongs to the PanD family. In terms of assembly, heterooctamer of four alpha and four beta subunits. It depends on pyruvate as a cofactor. Is synthesized initially as an inactive proenzyme, which is activated by self-cleavage at a specific serine bond to produce a beta-subunit with a hydroxyl group at its C-terminus and an alpha-subunit with a pyruvoyl group at its N-terminus.

Its subcellular location is the cytoplasm. The catalysed reaction is L-aspartate + H(+) = beta-alanine + CO2. It functions in the pathway cofactor biosynthesis; (R)-pantothenate biosynthesis; beta-alanine from L-aspartate: step 1/1. Catalyzes the pyruvoyl-dependent decarboxylation of aspartate to produce beta-alanine. The protein is Aspartate 1-decarboxylase of Neisseria meningitidis serogroup C / serotype 2a (strain ATCC 700532 / DSM 15464 / FAM18).